The primary structure comprises 852 residues: Cytochrome P450 monooxygenase mpaDE (852 aa).

Residues 1-6 are Lumenal-facing; the sequence is MDYLII. Residues 7–29 form a helical membrane-spanning segment; the sequence is IRITAVAVVLYLTRYVCCLYLHL. Residues 30–852 lie on the Cytoplasmic side of the membrane; it reads QDVPGPLFAK…DLEDAMEGTK (823 aa). Residue Cys-448 coordinates heme.

The protein belongs to the cytochrome P450 family. Heme is required as a cofactor.

The protein resides in the endoplasmic reticulum membrane. It carries out the reaction 5-methylorsellinate + reduced [NADPH--hemoprotein reductase] + O2 = 4,6-dihydroxy-2-(hydroxymethyl)-3-methylbenzoate + oxidized [NADPH--hemoprotein reductase] + H2O + H(+). It catalyses the reaction 4,6-dihydroxy-2-(hydroxymethyl)-3-methylbenzoate + H(+) = 5,7-dihydroxy-4-methylphthalide + H2O. Its pathway is secondary metabolite biosynthesis; terpenoid biosynthesis. Functionally, cytochrome P450 monooxygenase; part of the gene cluster that mediates the biosynthesis of mycophenolic acid (MPA), the first isolated antibiotic natural product in the world obtained from a culture of Penicillium brevicompactum in 1893. MpaDE is an endoplasmic reticulum-bound enzyme that catalyzes the conversion of 5-methylorsellinic acid (5MOA) into the phthalide compound 5,7-dihydroxy-4,6-dimethylphthalide (DHMP). MpaDE first catalyzes hydroxylation of 5-MOA to 4,6-dihydroxy-2-(hydroxymethyl)-3-methylbenzoic acid (DHMB), and then acts as a lactone synthase that catalyzes the ring closure to convert DHMB into DHMP. The first step of the pathway is the synthesis of 5-methylorsellinic acid (5MOA) by the cytosolic polyketide synthase mpaC. 5MOA is then converted to the phthalide compound 5,7-dihydroxy-4,6-dimethylphthalide (DHMP) by the endoplasmic reticulum-bound cytochrome P450 monooxygenase mpaDE. MpaDE first catalyzes hydroxylation of 5-MOA to 4,6-dihydroxy-2-(hydroxymethyl)-3-methylbenzoic acid (DHMB). MpaDE then acts as a lactone synthase that catalyzes the ring closure to convert DHMB into DHMP. The next step is the prenylation of DHMP by the Golgi apparatus-associated prenyltransferase mpaA to yield farnesyl-DHMP (FDHMP). The ER-bound oxygenase mpaB then mediates the oxidative cleavage the C19-C20 double bond in FDHMP to yield FDHMP-3C via a mycophenolic aldehyde intermediate. The O-methyltransferase mpaG catalyzes the methylation of FDHMP-3C to yield MFDHMP-3C. After the cytosolic methylation of FDHMP-3C, MFDHMP-3C enters into peroxisomes probably via free diffusion due to its low molecular weight. Upon a peroxisomal CoA ligation reaction, catalyzed by a beta-oxidation component enzyme acyl-CoA ligase ACL891, MFDHMP-3C-CoA would then be restricted to peroxisomes for the following beta-oxidation pathway steps. The peroxisomal beta-oxidation machinery than converts MFDHMP-3C-CoA into MPA_CoA, via a beta-oxidation chain-shortening process. Finally mpaH acts as a peroxisomal acyl-CoA hydrolase with high substrate specificity toward MPA-CoA to release the final product MPA. The sequence is that of Cytochrome P450 monooxygenase mpaDE from Penicillium roqueforti (strain FM164).